The following is a 356-amino-acid chain: MDFITIDLKERSYPIYFAYDSFDKLGEIVKKHVRSSKTFIITDFNVYPLYFEKLNESLKKSRFDVSYEVIPAGETSKTMEMAQRLLEKAYDSGLLRDSSVIALGGGVVGDIAGFVAATYMRGIDFVQIPTTLLAQVDSSVGGKVAVNLKKGKNIVGAFHQPKMVYIDAAVLNTLDKREILGGLAEIIKYGIIWDFDLFEYIENNLHEILDLKEDKLKHIVKKSCEIKGKIVSLDEKEENLRSILNFGHTIGHAIEALTGYEWYIHGEAVAIGMVYACKLALNLGYIDEKYFERIFSLIQRTGLPTDYEDLHKEDIIKAIKLDKKNRSSKINFVLPCGFGKVEVISVREEEILKVLK.

Residues Gly106–Asp110, Thr130–Thr131, Lys143, and Lys152 each bind NAD(+). Glu185, His248, and His265 together coordinate Zn(2+).

The protein belongs to the sugar phosphate cyclases superfamily. Dehydroquinate synthase family. Co(2+) is required as a cofactor. It depends on Zn(2+) as a cofactor. The cofactor is NAD(+).

The protein resides in the cytoplasm. The enzyme catalyses 7-phospho-2-dehydro-3-deoxy-D-arabino-heptonate = 3-dehydroquinate + phosphate. The protein operates within metabolic intermediate biosynthesis; chorismate biosynthesis; chorismate from D-erythrose 4-phosphate and phosphoenolpyruvate: step 2/7. Its function is as follows. Catalyzes the conversion of 3-deoxy-D-arabino-heptulosonate 7-phosphate (DAHP) to dehydroquinate (DHQ). This Thermoanaerobacter sp. (strain X514) protein is 3-dehydroquinate synthase.